A 78-amino-acid chain; its full sequence is uncharacterized protein (78 aa).

Positions 1-78 are disordered; the sequence is MSSNSNTDHS…VDLEGPKDEQ (78 aa). 2 stretches are compositionally biased toward basic and acidic residues: residues 10–33 and 63–78; these read STGD…ETES and LNLK…KDEQ.

This is an uncharacterized protein from Schizosaccharomyces pombe (strain 972 / ATCC 24843) (Fission yeast).